We begin with the raw amino-acid sequence, 483 residues long: Probable glycine dehydrogenase (decarboxylating) subunit 2 (483 aa).

The residue at position 264 (Lys264) is an N6-(pyridoxal phosphate)lysine.

It belongs to the GcvP family. C-terminal subunit subfamily. In terms of assembly, the glycine cleavage system is composed of four proteins: P, T, L and H. In this organism, the P 'protein' is a heterodimer of two subunits. Requires pyridoxal 5'-phosphate as cofactor.

The enzyme catalyses N(6)-[(R)-lipoyl]-L-lysyl-[glycine-cleavage complex H protein] + glycine + H(+) = N(6)-[(R)-S(8)-aminomethyldihydrolipoyl]-L-lysyl-[glycine-cleavage complex H protein] + CO2. In terms of biological role, the glycine cleavage system catalyzes the degradation of glycine. The P protein binds the alpha-amino group of glycine through its pyridoxal phosphate cofactor; CO(2) is released and the remaining methylamine moiety is then transferred to the lipoamide cofactor of the H protein. In Nitrosomonas eutropha (strain DSM 101675 / C91 / Nm57), this protein is Probable glycine dehydrogenase (decarboxylating) subunit 2.